The primary structure comprises 394 residues: MDSQGKKVVVCDNGTGFVKCGYAGSNFPEHIFPALVGRPVIRSTAKVGNIEIKDLMVGDEASELRSMLEVNYPMENGIVRNWDDMKHLWDYTFGPEKLNIDTRDCKILLTEPPMNPTKNREKIVEVMFETYQFSGVYVAIQAVLTLYAQGLLTGVVVDSGDGVTHICPVYEGFSLPHLTRRLDIAGRDITRYLIKLLLLRGYAFNHSADFETVRMIKEKLCYVGYNIEQEQKLALETTVLVESYTLPDGRVIKVGGERFEAPEALFQPHLINVEGVGVAELLFNTIQAADIDTRAEFYKHIVLSGGSTMYPGLPSRLERELKQLYLERVLKGDVEKLSKFKIRIEDPPRRKHMVFLGGAVLADIMKDKDNFWMTRQEYQEKGTRVLEKLGVTVR.

ATP is bound by residues 160–162 (GDG), 214–218 (RMIKE), and 305–310 (GGSTMY).

Belongs to the actin family. ARP2 subfamily. As to quaternary structure, component of the Arp2/3 complex composed of actr2/arp2, actr3/arp3, arpc1 (arpc1a or arpc1b), arpc2, arpc3, arpc4 and arpc5.

Its subcellular location is the cytoplasm. The protein localises to the cytoskeleton. The protein resides in the cell projection. It is found in the nucleus. Functionally, ATP-binding component of the Arp2/3 complex, a multiprotein complex that mediates actin polymerization upon stimulation by nucleation-promoting factor (NPF). The Arp2/3 complex mediates the formation of branched actin networks in the cytoplasm, providing the force for cell motility. Seems to contact the pointed end of the daughter actin filament. In addition to its role in the cytoplasmic cytoskeleton, the Arp2/3 complex also promotes actin polymerization in the nucleus, thereby regulating gene transcription and repair of damaged DNA. The Arp2/3 complex promotes homologous recombination (HR) repair in response to DNA damage by promoting nuclear actin polymerization, leading to drive motility of double-strand breaks (DSBs). The sequence is that of Actin-related protein 2-A (actr2-a) from Xenopus laevis (African clawed frog).